The following is a 492-amino-acid chain: Catalase (492 aa).

Residues histidine 65 and asparagine 138 contribute to the active site. Residue tyrosine 348 participates in heme binding.

The protein belongs to the catalase family. In terms of assembly, homotetramer. Requires heme as cofactor.

The protein resides in the cytoplasm. It is found in the cytosol. It localises to the peroxisome matrix. It carries out the reaction 2 H2O2 = O2 + 2 H2O. In terms of biological role, catalyzes the degradation of hydrogen peroxide (H(2)O(2)) generated by peroxisomal oxidases to water and oxygen, thereby protecting cells from the toxic effects of hydrogen peroxide. This chain is Catalase (CATA), found in Triticum aestivum (Wheat).